A 465-amino-acid polypeptide reads, in one-letter code: UDP-N-acetylmuramate--L-alanine ligase (465 aa).

114–120 (GTHGKTT) is a binding site for ATP.

Belongs to the MurCDEF family.

It is found in the cytoplasm. The catalysed reaction is UDP-N-acetyl-alpha-D-muramate + L-alanine + ATP = UDP-N-acetyl-alpha-D-muramoyl-L-alanine + ADP + phosphate + H(+). It functions in the pathway cell wall biogenesis; peptidoglycan biosynthesis. Cell wall formation. The protein is UDP-N-acetylmuramate--L-alanine ligase of Chelativorans sp. (strain BNC1).